The sequence spans 28 residues: Taicatoxin, alpha-neurotoxin-like component (28 aa).

Cys3 and Cys21 are disulfide-bonded.

This sequence belongs to the three-finger toxin family. Long-chain subfamily. Type II alpha-neurotoxin sub-subfamily. In terms of assembly, heterotrimer composed of this alpha-neurotoxin-like peptide of 8 kDa, a neurotoxic phospholipase of 16 kDa (AC Q7LZG2) and a serine protease inhibitor of 7 kDa (AC B7S4N9) at an approximate stoichiometry of 1:1:4; non-covalently linked. Expressed by the venom gland.

It is found in the secreted. The heterotrimer blocks the voltage-dependent L-type calcium channels (Cav1/CACNA1) from the heart, and the small conductance calcium-activated potassium channels (KCa2/KCNN) in the chromaffin cells and in the brain. Is very toxic to mice. This chain is Taicatoxin, alpha-neurotoxin-like component, found in Oxyuranus scutellatus scutellatus (Australian taipan).